A 109-amino-acid chain; its full sequence is Probable spanin, inner membrane subunit (109 aa).

A helical; Signal-anchor for type II membrane protein transmembrane segment spans residues 1–17; it reads MPRTIVAILVLAVVALG. A coiled-coil region spans residues 27-63; that stretch reads RALGIAQGEIKRQTARAEALEVRYATLQRHVKEVAAR.

In terms of assembly, interacts (via C-terminus) with the spanin outer lipoprotein subunit (via C-terminus). Part of the spanin complex which spans the entire periplasmic space. The spanin complex is composed of spanin inner membrane subunit and spanin outer membrane subunit.

The protein resides in the host cell inner membrane. Functionally, component of the spanin complex that disrupts the host outer membrane and participates in cell lysis during virus exit. The spanin complex conducts the final step in host lysis by disrupting the outer membrane after holin and endolysin action have permeabilized the inner membrane and degraded the host peptidoglycans. Host outer membrane disruption is possibly due to local fusion between the inner and outer membrane performed by the spanin complex. This Pseudomonas aeruginosa protein is Probable spanin, inner membrane subunit.